We begin with the raw amino-acid sequence, 69 residues long: Amphipathic peptide CT2 (69 aa).

Positions 1–23 (MKTQFVILIVAVVLLQLIANSEA) are cleaved as a signal peptide. Residue F36 is modified to Phenylalanine amide. The propeptide occupies 40-69 (GLRNLDNLDDDIFEPEMSEADLRYLQDLLR).

Belongs to the non-disulfide-bridged peptide (NDBP) superfamily. Short antimicrobial peptide (group 4) family. In terms of tissue distribution, expressed by the venom gland.

The protein resides in the secreted. It localises to the target cell membrane. Amphipathic peptide that shows antibacterial activities against both Gram-positive (MIC=10 uM, 20 uM and 20 uM against S.aureus, B.subtilis and S.agalactiae, respectively) and Gram-negative bacteria (MIC=20 uM, 10 uM, and 10 uM against E.coli, S.typhi, and P.aeruginosa, respectively). Is mildly hemolytic at its MIC range, but shows a strong cytotoxic activity at higher concentrations, reaching 84% lysis at 50 uM. In Vaejovis mexicanus smithi (Mexican scorpion), this protein is Amphipathic peptide CT2.